We begin with the raw amino-acid sequence, 121 residues long: Flagellar protein FliT (121 aa).

Residues 1-50 form a required for homodimerization region; it reads MNHAPHLYFAWQQLVEKSQLMLRLATEEQWDELIASEMAYVNAVQEIAHL. Positions 60–98 are fliD binding; sequence MQEQLRPMLRLILDNESKVKQLLQIRMDELAKLVGQSSV.

It belongs to the FliT family. Homodimer. Interacts with FliD and FlhC.

The protein localises to the cytoplasm. The protein resides in the cytosol. Its function is as follows. Dual-function protein that regulates the transcription of class 2 flagellar operons and that also acts as an export chaperone for the filament-capping protein FliD. As a transcriptional regulator, acts as an anti-FlhDC factor; it directly binds FlhC, thus inhibiting the binding of the FlhC/FlhD complex to class 2 promoters, resulting in decreased expression of class 2 flagellar operons. As a chaperone, effects FliD transition to the membrane by preventing its premature polymerization, and by directing it to the export apparatus. The polypeptide is Flagellar protein FliT (Escherichia coli O157:H7).